Here is a 274-residue protein sequence, read N- to C-terminus: Kit ligand (274 aa).

The N-terminal stretch at 1-25 is a signal peptide; it reads MKKTQTWIITCIYLQLLLFNPLVRT. Position 26 is a pyrrolidone carboxylic acid (Gln-26). Residues 26-215 lie on the Extracellular side of the membrane; it reads QGICRNRVTD…SDSIEDSSLQ (190 aa). Disulfide bonds link Cys-29–Cys-114 and Cys-68–Cys-164. Asn-90, Asn-97, Asn-145, and Asn-196 each carry an N-linked (GlcNAc...) asparagine glycan. The helical transmembrane segment at 216–238 threads the bilayer; it reads WAAVALPAFFSLVIGFAFGALYW. The Cytoplasmic portion of the chain corresponds to 239–274; the sequence is KKKQPNLTRTVENIQINEEDNEISMLQEKEREFQEV.

Belongs to the SCF family. As to quaternary structure, homodimer, non-covalently linked. Heterotetramer with KIT, binding two KIT molecules; thereby mediates KIT dimerization and subsequent activation by autophosphorylation. In terms of processing, a soluble form is produced by proteolytic processing of the extracellular domain.

It localises to the cytoplasm. It is found in the cytoskeleton. The protein localises to the cell membrane. The protein resides in the cell projection. Its subcellular location is the lamellipodium. It localises to the filopodium. It is found in the secreted. Functionally, ligand for the receptor-type protein-tyrosine kinase KIT. Plays an essential role in the regulation of cell survival and proliferation, hematopoiesis, stem cell maintenance, gametogenesis, mast cell development, migration and function, and in melanogenesis. KITLG/SCF binding can activate several signaling pathways. Promotes phosphorylation of PIK3R1, the regulatory subunit of phosphatidylinositol 3-kinase, and subsequent activation of the kinase AKT1. KITLG/SCF and KIT also transmit signals via GRB2 and activation of RAS, RAF1 and the MAP kinases MAPK1/ERK2 and/or MAPK3/ERK1. KITLG/SCF and KIT promote activation of STAT family members STAT1, STAT3 and STAT5. KITLG/SCF and KIT promote activation of PLCG1, leading to the production of the cellular signaling molecules diacylglycerol and inositol 1,4,5-trisphosphate. KITLG/SCF acts synergistically with other cytokines, probably interleukins. The protein is Kit ligand (KITLG) of Sus scrofa (Pig).